The chain runs to 1156 residues: GPI inositol-deacylase (1156 aa).

Residues Met-1–Lys-95 are disordered. Composition is skewed to polar residues over residues Val-20–Phe-37 and Gly-61–Leu-72. Positions Thr-75–Lys-95 are enriched in low complexity. A helical membrane pass occupies residues Thr-131–Val-151. Ser-318 is a catalytic residue. Transmembrane regions (helical) follow at residues Leu-797–Leu-817 and Phe-845–Ile-865. Asn-877 carries an N-linked (GlcNAc...) asparagine glycan. Transmembrane regions (helical) follow at residues Ala-897–Leu-917 and Ile-966–Ile-986. Asn-1009 is a glycosylation site (N-linked (GlcNAc...) asparagine). The next 4 helical transmembrane spans lie at Ser-1016–Ala-1036, Val-1053–Pro-1073, His-1081–Tyr-1101, and Ala-1102–Phe-1122.

The protein belongs to the GPI inositol-deacylase family.

It is found in the endoplasmic reticulum membrane. Its function is as follows. Involved in inositol deacylation of GPI-anchored proteins which plays important roles in the quality control and ER-associated degradation of GPI-anchored proteins. This chain is GPI inositol-deacylase (bst1), found in Aspergillus fumigatus (strain ATCC MYA-4609 / CBS 101355 / FGSC A1100 / Af293) (Neosartorya fumigata).